The primary structure comprises 557 residues: 2-isopropylmalate synthase (557 aa).

The Pyruvate carboxyltransferase domain occupies 31 to 304 (PTWCSVDLRD…DPGLNFASML (274 aa)). Mg(2+) is bound by residues Asp-40, His-243, His-245, and Asn-279. The regulatory domain stretch occupies residues 439–557 (IENPIKFLNF…NTMIKDSAAV (119 aa)).

It belongs to the alpha-IPM synthase/homocitrate synthase family. LeuA type 2 subfamily. Homodimer. Mg(2+) serves as cofactor.

Its subcellular location is the cytoplasm. The catalysed reaction is 3-methyl-2-oxobutanoate + acetyl-CoA + H2O = (2S)-2-isopropylmalate + CoA + H(+). It functions in the pathway amino-acid biosynthesis; L-leucine biosynthesis; L-leucine from 3-methyl-2-oxobutanoate: step 1/4. Its function is as follows. Catalyzes the condensation of the acetyl group of acetyl-CoA with 3-methyl-2-oxobutanoate (2-ketoisovalerate) to form 3-carboxy-3-hydroxy-4-methylpentanoate (2-isopropylmalate). This chain is 2-isopropylmalate synthase, found in Desulfitobacterium hafniense (strain Y51).